The following is an 888-amino-acid chain: Bifunctional lysine-specific demethylase and histidyl-hydroxylase NO66 (888 aa).

3 disordered regions span residues 83–157 (AAAK…GSFS), 187–208 (SNNSDFDFDSDGDSNDFDDSDA), and 261–446 (NSTS…NKLS). Residues 98-108 (REKNIAKKQPE) are compositionally biased toward basic and acidic residues. Residues 116 to 139 (ENVQKQLENGQENNGTLINLSNGK) are compositionally biased toward polar residues. The span at 192 to 207 (FDFDSDGDSNDFDDSD) shows a compositional bias: acidic residues. Residues 273–284 (VEPRKAAKRNEP) are compositionally biased toward basic and acidic residues. The span at 392-403 (KNKNNDNNNIDT) shows a compositional bias: low complexity. Basic and acidic residues predominate over residues 404–429 (NNKKDANNKKDANNNKDINNKKDANN). The segment covering 430-444 (NKDTNNNKDNNNKNK) has biased composition (low complexity). The JmjC domain occupies 564 to 709 (CSIRILNPST…NLLEVLMPSV (146 aa)). H610, D612, and H675 together coordinate Fe cation.

Belongs to the ROX family. NO66 subfamily. The cofactor is Fe(2+).

It localises to the nucleus. It catalyses the reaction N(6),N(6)-dimethyl-L-lysyl(36)-[histone H3] + 2 2-oxoglutarate + 2 O2 = L-lysyl(36)-[histone H3] + 2 formaldehyde + 2 succinate + 2 CO2. Its function is as follows. Oxygenase that can act as both a histone lysine demethylase and a ribosomal histidine hydroxylase. Specifically demethylates 'Lys-4' (H3K4me) and 'Lys-36' (H3K36me) of histone H3, thereby playing a central role in histone code. The protein is Bifunctional lysine-specific demethylase and histidyl-hydroxylase NO66 of Drosophila mojavensis (Fruit fly).